Here is a 128-residue protein sequence, read N- to C-terminus: Probable 4-amino-4-deoxy-L-arabinose-phosphoundecaprenol flippase subunit ArnF (128 aa).

The Cytoplasmic segment spans residues Met1–Ser10. The chain crosses the membrane as a helical span at residues Val11–Leu31. Residues Ser32–Gln47 lie on the Periplasmic side of the membrane. Residues Leu48–Ala68 traverse the membrane as a helical segment. Over Leu69 to Ala77 the chain is Cytoplasmic. A helical membrane pass occupies residues Tyr78–Phe98. At Asn99–Pro101 the chain is on the periplasmic side. The chain crosses the membrane as a helical span at residues Ala102–Ile122. Residues Lys123 to Ser128 are Cytoplasmic-facing.

It belongs to the ArnF family. Heterodimer of ArnE and ArnF.

Its subcellular location is the cell inner membrane. It participates in bacterial outer membrane biogenesis; lipopolysaccharide biosynthesis. Its function is as follows. Translocates 4-amino-4-deoxy-L-arabinose-phosphoundecaprenol (alpha-L-Ara4N-phosphoundecaprenol) from the cytoplasmic to the periplasmic side of the inner membrane. This chain is Probable 4-amino-4-deoxy-L-arabinose-phosphoundecaprenol flippase subunit ArnF, found in Yersinia pseudotuberculosis serotype O:1b (strain IP 31758).